The primary structure comprises 1106 residues: DNA polymerase delta catalytic subunit (1106 aa).

The disordered stretch occupies residues 1–28 (MDGKRRPGPGPGVPPKRARGGLWDEDEA). The Nuclear localization signal motif lies at 4-19 (KRRPGPGPGVPPKRAR). An Omega-N-methylarginine modification is found at arginine 19. Lysine 573 is covalently cross-linked (Glycyl lysine isopeptide (Lys-Gly) (interchain with G-Cter in SUMO2)). Residues cysteine 1011, cysteine 1014, cysteine 1025, and cysteine 1028 each coordinate Zn(2+). A CysA-type zinc finger spans residues 1011–1028 (CIGCRTVLSHQGAVCKFC). The [4Fe-4S] cluster site is built by cysteine 1057, cysteine 1060, cysteine 1070, and cysteine 1075. The short motif at 1057–1075 (CQRCQGSLHEDVICTSRDC) is the CysB motif element.

It belongs to the DNA polymerase type-B family. In terms of assembly, component of the tetrameric DNA polymerase delta complex (Pol-delta4), which consists of POLD1/p125, POLD2/p50, POLD3/p66/p68 and POLD4/p12, with POLD1 bearing both DNA polymerase and 3' to 5' proofreading exonuclease activities. Within Pol-delta4, directly interacts with POLD2 and POLD4. Following genotoxic stress by DNA-damaging agents, such as ultraviolet light and methyl methanesulfonate, or by replication stress induced by treatment with hydroxyurea or aphidicolin, Pol-delta4 is converted into a trimeric form of the complex (Pol-delta3) by POLD4 degradation. Pol-delta3 is the major form at S phase replication sites and DNA damage sites. POLD1 displays different catalytic properties depending upon the complex it is found in. It exhibits higher proofreading activity and fidelity than Pol-delta4, making it particularly well suited to respond to DNA damage. Directly interacts with PCNA, as do POLD3 and POLD4; this interaction stimulates Pol-delta4 polymerase activity. As POLD2 and POLD4, directly interacts with WRNIP1; this interaction stimulates DNA polymerase delta-mediated DNA synthesis, independently of the presence of PCNA. This stimulation may be due predominantly to an increase of initiation frequency and also to increased processivity. Also observed as a dimeric complex with POLD2 (Pol-delta2). Pol-delta2 is relatively insensitive to the PCNA stimulation (2-5-fold) compared to Pol-delta4 that is stimulated by over 50-fold. Interacts with POLDIP2; this interaction is indirect and most probably mediated through POLD2-binding. Interacts with CIAO1. Interacts with POLDIP2. Interacts with RFC1. [4Fe-4S] cluster is required as a cofactor.

It is found in the nucleus. It carries out the reaction DNA(n) + a 2'-deoxyribonucleoside 5'-triphosphate = DNA(n+1) + diphosphate. Its activity is regulated as follows. Regulated by alteration of quaternary structure. Exhibits burst rates of DNA synthesis are about 5 times faster in the presence of POLD4 (Pol-delta4 complex) than in its absence (Pol-delta3 complex), while the affinity of the enzyme for its DNA and dNTP substrates appears unchanged. The Pol-delta3 complex is more likely to proofread DNA synthesis because it cleaves single-stranded DNA twice as fast and transfers mismatched DNA from the polymerase to the exonuclease sites 9 times faster compared to the Pol-delta3 complex. Pol-delta3 also extends mismatched primers 3 times more slowly in the absence of POLD4. The conversion of Pol-delta4 into Pol-delta3 is induced by genotoxic stress or by replication stress leading POLD4 degradation. Stimulated in the presence of PCNA. This stimulation is further increased in the presence of KCTD13/PDIP1, most probably via direct interaction between KCTD13 and POLD2. As the catalytic component of the trimeric (Pol-delta3 complex) and tetrameric DNA polymerase delta complexes (Pol-delta4 complex), plays a crucial role in high fidelity genome replication, including in lagging strand synthesis, and repair. Exhibits both DNA polymerase and 3'- to 5'-exonuclease activities. Requires the presence of accessory proteins POLD2, POLD3 and POLD4 for full activity. Depending upon the absence (Pol-delta3) or the presence of POLD4 (Pol-delta4), displays differences in catalytic activity. Most notably, expresses higher proofreading activity in the context of Pol-delta3 compared with that of Pol-delta4. Although both Pol-delta3 and Pol-delta4 process Okazaki fragments in vitro, Pol-delta3 may be better suited to fulfill this task, exhibiting near-absence of strand displacement activity compared to Pol-delta4 and stalling on encounter with the 5'-blocking oligonucleotides. Pol-delta3 idling process may avoid the formation of a gap, while maintaining a nick that can be readily ligated. Along with DNA polymerase kappa, DNA polymerase delta carries out approximately half of nucleotide excision repair (NER) synthesis following UV irradiation. Under conditions of DNA replication stress, in the presence of POLD3 and POLD4, may catalyze the repair of broken replication forks through break-induced replication (BIR). Involved in the translesion synthesis (TLS) of templates carrying O6-methylguanine, 8oxoG or abasic sites. The polypeptide is DNA polymerase delta catalytic subunit (POLD1) (Bos taurus (Bovine)).